The sequence spans 886 residues: Cytosolic carboxypeptidase-like protein 5 (886 aa).

Residues 157–570 form the Peptidase M14 domain; it reads YPFSYSDCQD…AMAIAALDMA (414 aa). Zn(2+) contacts are provided by His252 and Glu255. Polar residues predominate over residues 344-353; that stretch reads AKSPTNQQPT. Disordered stretches follow at residues 344 to 363 and 374 to 401; these read AKSP…APLS and EAHL…KTDP. His434 contributes to the Zn(2+) binding site. Residue Glu516 is the Proton donor/acceptor of the active site. Disordered stretches follow at residues 602-737 and 783-846; these read GLTS…RNMG and TRLQ…PAFS. The span at 621 to 635 shows a compositional bias: polar residues; that stretch reads PKSNNSLPVSCSENA. Low complexity predominate over residues 643-654; the sequence is STGTSTGGSSSS. Polar residues predominate over residues 655-666; the sequence is QQNSPQMKNSPS. Over residues 714–737 the composition is skewed to low complexity; the sequence is STTSSLAPSPTLASSGPTSSRNMG. The segment covering 805–815 has biased composition (polar residues); the sequence is SSPTSPIPQTR. Ser841 carries the post-translational modification Phosphoserine.

It belongs to the peptidase M14 family. Zn(2+) serves as cofactor. As to expression, widely expressed. Highly expressed in testis, and moderately in pituitary, brain, eye and kidney.

The protein localises to the cytoplasm. It localises to the cytosol. Its subcellular location is the nucleus. It is found in the cytoskeleton. The protein resides in the spindle. The protein localises to the midbody. The enzyme catalyses gamma-L-glutamyl-L-glutamyl-[protein] + H2O = L-glutamyl-[protein] + L-glutamate. It catalyses the reaction (L-glutamyl)(n+1)-gamma-L-glutamyl-L-glutamyl-[protein] + H2O = (L-glutamyl)(n)-gamma-L-glutamyl-L-glutamyl-[protein] + L-glutamate. It carries out the reaction C-terminal L-alpha-aminoacyl-L-glutamyl-[tubulin] + H2O = C-terminal L-alpha-aminoacyl-[tubulin] + L-glutamate. The catalysed reaction is C-terminal L-alpha-aminoacyl-L-glutamyl-L-glutamyl-[tubulin] + H2O = C-terminal L-alpha-aminoacyl-L-glutamyl-[tubulin] + L-glutamate. Metallocarboxypeptidase that mediates deglutamylation of tubulin and non-tubulin target proteins. Catalyzes the removal of polyglutamate side chains present on the gamma-carboxyl group of glutamate residues within the C-terminal tail of alpha- and beta-tubulin. Cleaves alpha- and gamma-linked polyglutamate tubulin side-chain, as well as the branching point glutamate. Also catalyzes the removal of alpha-linked glutamate residues from the carboxy-terminus of alpha-tubulin. Mediates deglutamylation of nucleotidyltransferase CGAS, leading to CGAS antiviral defense response activation. This is Cytosolic carboxypeptidase-like protein 5 from Mus musculus (Mouse).